Here is a 422-residue protein sequence, read N- to C-terminus: UDP-N-acetylglucosamine 1-carboxyvinyltransferase (422 aa).

A phosphoenolpyruvate-binding site is contributed by 22–23 (KN). Position 93 (arginine 93) interacts with UDP-N-acetyl-alpha-D-glucosamine. The Proton donor role is filled by cysteine 117. At cysteine 117 the chain carries 2-(S-cysteinyl)pyruvic acid O-phosphothioketal. Residues 122–126 (RPVDL), aspartate 308, and leucine 330 contribute to the UDP-N-acetyl-alpha-D-glucosamine site.

Belongs to the EPSP synthase family. MurA subfamily.

It is found in the cytoplasm. It catalyses the reaction phosphoenolpyruvate + UDP-N-acetyl-alpha-D-glucosamine = UDP-N-acetyl-3-O-(1-carboxyvinyl)-alpha-D-glucosamine + phosphate. Its pathway is cell wall biogenesis; peptidoglycan biosynthesis. Cell wall formation. Adds enolpyruvyl to UDP-N-acetylglucosamine. The protein is UDP-N-acetylglucosamine 1-carboxyvinyltransferase of Helicobacter pylori (strain J99 / ATCC 700824) (Campylobacter pylori J99).